Consider the following 132-residue polypeptide: Small ribosomal subunit protein uS8 (132 aa).

It belongs to the universal ribosomal protein uS8 family. In terms of assembly, part of the 30S ribosomal subunit. Contacts proteins S5 and S12.

One of the primary rRNA binding proteins, it binds directly to 16S rRNA central domain where it helps coordinate assembly of the platform of the 30S subunit. The chain is Small ribosomal subunit protein uS8 from Staphylococcus saprophyticus subsp. saprophyticus (strain ATCC 15305 / DSM 20229 / NCIMB 8711 / NCTC 7292 / S-41).